A 294-amino-acid chain; its full sequence is Ribosomal protein L11 methyltransferase (294 aa).

S-adenosyl-L-methionine-binding residues include Thr147, Gly169, Asp191, and Asn231.

The protein belongs to the methyltransferase superfamily. PrmA family.

The protein resides in the cytoplasm. The enzyme catalyses L-lysyl-[protein] + 3 S-adenosyl-L-methionine = N(6),N(6),N(6)-trimethyl-L-lysyl-[protein] + 3 S-adenosyl-L-homocysteine + 3 H(+). Functionally, methylates ribosomal protein L11. This chain is Ribosomal protein L11 methyltransferase, found in Dichelobacter nodosus (strain VCS1703A).